Here is a 283-residue protein sequence, read N- to C-terminus: MAVPPTYADLGKSARDVFTKGYGFGLIKLDLKTKSENGLEFTSSGSANTETTKVNGSLETKYRWTEYGLTFTEKWNTDNTLGTEITVEDQLARGLKLTFDSSFSPNTGKKNAKIKTGYKREHINLGCDVDFDIAGPSIRGALVLGYEGWLAGYQMNFETSKSRVTQSNFAVGYKTDEFQLHTNVNDGTEFGGSIYQKVNKKLETAVNLAWTAGNSNTRFGIAAKYQVDPDACFSAKVNNSSLIGLGYTQTLKPGIKLTLSALLDGKNVNAGGHKLGLGLEFQA.

Residue A2 is modified to N-acetylalanine. K12 serves as a coordination point for ATP. K12 is covalently cross-linked (Glycyl lysine isopeptide (Lys-Gly) (interchain with G-Cter in ubiquitin)). At S13 the chain carries Phosphoserine. T19 carries the post-translational modification Phosphothreonine. K20 serves as a coordination point for ATP. K20 carries the post-translational modification N6-acetyllysine; alternate. K20 is subject to N6-succinyllysine; alternate. K20 is covalently cross-linked (Glycyl lysine isopeptide (Lys-Gly) (interchain with G-Cter in ubiquitin); alternate). The next 2 membrane-spanning stretches (beta stranded) occupy residues 26–35 (LIKLDLKTKS) and 39–47 (LEFTSSGSA). Glycyl lysine isopeptide (Lys-Gly) (interchain with G-Cter in ubiquitin) cross-links involve residues K53 and K61. The chain crosses the membrane as a beta stranded span at residues 54–64 (VNGSLETKYRW). Y67 is subject to Phosphotyrosine. 3 beta stranded membrane-spanning segments follow: residues 69–76 (LTFTEKWN), 80–89 (TLGTEITVED), and 95–104 (LKLTFDSSFS). A Phosphothreonine modification is found at T107. At K109 the chain carries N6-acetyllysine; alternate. K109 is covalently cross-linked (Glycyl lysine isopeptide (Lys-Gly) (interchain with G-Cter in ubiquitin); alternate). K110 is covalently cross-linked (Glycyl lysine isopeptide (Lys-Gly) (interchain with G-Cter in ubiquitin)). 4 consecutive transmembrane segments (beta stranded) span residues 111–120 (NAKIKTGYKR), 123–130 (INLGCDVD), 137–145 (SIRGALVLG), and 150–158 (LAGYQMNFE). S137 is subject to Phosphoserine. K161 is covalently cross-linked (Glycyl lysine isopeptide (Lys-Gly) (interchain with G-Cter in ubiquitin)). 6 beta stranded membrane passes run 163–175 (RVTQSNFAVGYKT), 178–185 (FQLHTNVN), 189–198 (EFGGSIYQKV), 202–211 (LETAVNLAWT), 218–227 (RFGIAAKYQV), and 231–238 (ACFSAKVN). Residue S193 is modified to Phosphoserine; by NEK1. Phosphoserine is present on S240. 242 to 244 (LIG) serves as a coordination point for NAD(+). A beta stranded transmembrane segment spans residues 242–251 (LIGLGYTQTL). An N6-acetyllysine modification is found at K252. A beta stranded membrane pass occupies residues 254 to 263 (GIKLTLSALL). Residue 260 to 264 (SALLD) participates in NAD(+) binding. K266 carries the N6-acetyllysine; alternate modification. K266 is covalently cross-linked (Glycyl lysine isopeptide (Lys-Gly) (interchain with G-Cter in ubiquitin); alternate). Residues 273-282 (HKLGLGLEFQ) form a beta stranded membrane-spanning segment. A Glycyl lysine isopeptide (Lys-Gly) (interchain with G-Cter in ubiquitin) cross-link involves residue K274.

It belongs to the eukaryotic mitochondrial porin family. In terms of assembly, homodimer and homotrimer; in response to cyclic AMP or calcium; oligomerization is required for scramblase activity. Component of the mitochondrial permeability transition pore complex (mPTPC), at least composed of SPG7, VDAC1 and PPIF. Interacts with SPG7, NIPSNAP2 and SLC25A30. Interacts with hexokinases including HK1. The HK1-VDAC1 complex interacts with ATF2. Interacts with BCL2L1. Interacts with BAK1. Interacts with RTL10/BOP (via BH3 domain). Interacts with amyloid-beta and APP; induces VDAC1 dephosphorylation. Interacts with TMEM41B. Interacts with BCAP31. Interacts with HSPA9; this interaction couples ITPR1 to VDAC1. Post-translationally, phosphorylation at Ser-193 by NEK1 promotes the closed conformational state preventing excessive mitochondrial membrane permeability and subsequent apoptotic cell death after injury. Phosphorylation by the AKT-GSK3B axis stabilizes the protein probably by preventing ubiquitin-mediated proteasomal degradation. Ubiquitinated. Undergoes monoubiquitination and polyubiquitination by PRKN; monoubiquitination at Lys-274 inhibits apoptosis, whereas polyubiquitination leads to its degradation and promotes mitophagy. Deubiquitinated by USP30. Widely expressed. High levels in heart and kidney with lower levels in brain and ascitic tumor. Very low levels in liver.

It is found in the mitochondrion outer membrane. Its subcellular location is the cell membrane. It localises to the membrane raft. It catalyses the reaction Ca(2+)(in) = Ca(2+)(out). The enzyme catalyses Na(+)(in) = Na(+)(out). The catalysed reaction is chloride(in) = chloride(out). It carries out the reaction Mg(2+)(in) = Mg(2+)(out). It catalyses the reaction K(+)(in) = K(+)(out). The enzyme catalyses ATP(in) = ATP(out). The catalysed reaction is L-glutamate(out) = L-glutamate(in). It carries out the reaction dopamine(out) = dopamine(in). It catalyses the reaction acetylcholine(in) = acetylcholine(out). The enzyme catalyses Fe(III)-[cytochrome c](out) = Fe(III)-[cytochrome c](in). The catalysed reaction is a 1,2-diacyl-sn-glycero-3-phosphocholine(in) = a 1,2-diacyl-sn-glycero-3-phosphocholine(out). It carries out the reaction a 1,2-diacyl-sn-glycero-3-phospho-L-serine(in) = a 1,2-diacyl-sn-glycero-3-phospho-L-serine(out). Its activity is regulated as follows. Inhibited by nitric oxide. Voltage-gated ion channel activity is inhibited by lanthanum(3+) and ruthenium red. Mitochondrial calcium transport is inhibited by lanthanum(3+), ruthenium red and Ru360. Non-selective voltage-gated ion channel that mediates the transport of anions and cations through the mitochondrion outer membrane and plasma membrane. The channel at the outer mitochondrial membrane allows diffusion of small hydrophilic molecules; in the plasma membrane it is involved in cell volume regulation and apoptosis. It adopts an open conformation at low or zero membrane potential and a closed conformation at potentials above 30-40 mV. The open state has a weak anion selectivity whereas the closed state is cation-selective. Binds various signaling molecules, including the sphingolipid ceramide, the phospholipid phosphatidylcholine, and the sterols cholesterol and oxysterol. In depolarized mitochondria, acts downstream of PRKN and PINK1 to promote mitophagy or prevent apoptosis; polyubiquitination by PRKN promotes mitophagy, while monoubiquitination by PRKN decreases mitochondrial calcium influx which ultimately inhibits apoptosis. May participate in the formation of the permeability transition pore complex (PTPC) responsible for the release of mitochondrial products that triggers apoptosis. May mediate ATP export from cells. Part of a complex composed of HSPA9, ITPR1 and VDAC1 that regulates mitochondrial calcium-dependent apoptosis by facilitating calcium transport from the ER lumen to the mitochondria intermembrane space thus providing calcium for the downstream calcium channel MCU that directly releases it into mitochondria matrix. Functionally, catalyzes the scrambling of phospholipids across the outer mitochondrial membrane; the mechanism is unrelated to channel activity and is capable of translocating both anionic and zwitterionic phospholipids. The sequence is that of Non-selective voltage-gated ion channel VDAC1 from Rattus norvegicus (Rat).